We begin with the raw amino-acid sequence, 204 residues long: Urease accessory protein UreG (204 aa).

12-19 (GPVGSGKT) provides a ligand contact to GTP.

It belongs to the SIMIBI class G3E GTPase family. UreG subfamily. As to quaternary structure, homodimer. UreD, UreF and UreG form a complex that acts as a GTP-hydrolysis-dependent molecular chaperone, activating the urease apoprotein by helping to assemble the nickel containing metallocenter of UreC. The UreE protein probably delivers the nickel.

The protein localises to the cytoplasm. Facilitates the functional incorporation of the urease nickel metallocenter. This process requires GTP hydrolysis, probably effectuated by UreG. This is Urease accessory protein UreG from Pseudomonas fluorescens (strain Pf0-1).